Reading from the N-terminus, the 96-residue chain is Putative septation protein SpoVG (96 aa).

Belongs to the SpoVG family.

In terms of biological role, could be involved in septation. This Clostridium kluyveri (strain ATCC 8527 / DSM 555 / NBRC 12016 / NCIMB 10680 / K1) protein is Putative septation protein SpoVG.